Here is a 384-residue protein sequence, read N- to C-terminus: S-adenosylmethionine synthase (384 aa).

H15 serves as a coordination point for ATP. Position 17 (D17) interacts with Mg(2+). Position 43 (E43) interacts with K(+). Residues E56 and Q99 each coordinate L-methionine. Residues 99-109 form a flexible loop region; it reads QSPDINQGVDR. ATP is bound by residues 164-166, 231-232, D240, 246-247, A263, and K267; these read DAK, RF, and RK. An L-methionine-binding site is contributed by D240. K271 is an L-methionine binding site.

It belongs to the AdoMet synthase family. As to quaternary structure, homotetramer; dimer of dimers. It depends on Mg(2+) as a cofactor. K(+) serves as cofactor.

The protein localises to the cytoplasm. It carries out the reaction L-methionine + ATP + H2O = S-adenosyl-L-methionine + phosphate + diphosphate. It functions in the pathway amino-acid biosynthesis; S-adenosyl-L-methionine biosynthesis; S-adenosyl-L-methionine from L-methionine: step 1/1. Functionally, catalyzes the formation of S-adenosylmethionine (AdoMet) from methionine and ATP. The overall synthetic reaction is composed of two sequential steps, AdoMet formation and the subsequent tripolyphosphate hydrolysis which occurs prior to release of AdoMet from the enzyme. The protein is S-adenosylmethionine synthase of Shewanella woodyi (strain ATCC 51908 / MS32).